A 156-amino-acid chain; its full sequence is ATP synthase subunit b', organellar chromatophore (156 aa).

A helical membrane pass occupies residues 23-43; it reads TLPLMAIQVVFLTFILNAIFF.

The protein belongs to the ATPase B chain family. F-type ATPases have 2 components, F(1) - the catalytic core - and F(0) - the membrane proton channel. F(1) has five subunits: alpha(3), beta(3), gamma(1), delta(1), epsilon(1). F(0) has four main subunits: a(1), b(1), b'(1) and c(10-14). The alpha and beta chains form an alternating ring which encloses part of the gamma chain. F(1) is attached to F(0) by a central stalk formed by the gamma and epsilon chains, while a peripheral stalk is formed by the delta, b and b' chains.

It localises to the plastid. It is found in the organellar chromatophore thylakoid membrane. In terms of biological role, f(1)F(0) ATP synthase produces ATP from ADP in the presence of a proton or sodium gradient. F-type ATPases consist of two structural domains, F(1) containing the extramembraneous catalytic core and F(0) containing the membrane proton channel, linked together by a central stalk and a peripheral stalk. During catalysis, ATP synthesis in the catalytic domain of F(1) is coupled via a rotary mechanism of the central stalk subunits to proton translocation. Functionally, component of the F(0) channel, it forms part of the peripheral stalk, linking F(1) to F(0). The b'-subunit is a diverged and duplicated form of b found in plants and photosynthetic bacteria. The chain is ATP synthase subunit b', organellar chromatophore from Paulinella chromatophora.